Reading from the N-terminus, the 372-residue chain is Anhydro-N-acetylmuramic acid kinase (372 aa).

Residue 18–25 (GTSLDGID) coordinates ATP.

This sequence belongs to the anhydro-N-acetylmuramic acid kinase family.

It carries out the reaction 1,6-anhydro-N-acetyl-beta-muramate + ATP + H2O = N-acetyl-D-muramate 6-phosphate + ADP + H(+). It participates in amino-sugar metabolism; 1,6-anhydro-N-acetylmuramate degradation. The protein operates within cell wall biogenesis; peptidoglycan recycling. Catalyzes the specific phosphorylation of 1,6-anhydro-N-acetylmuramic acid (anhMurNAc) with the simultaneous cleavage of the 1,6-anhydro ring, generating MurNAc-6-P. Is required for the utilization of anhMurNAc either imported from the medium or derived from its own cell wall murein, and thus plays a role in cell wall recycling. In Thiobacillus denitrificans (strain ATCC 25259 / T1), this protein is Anhydro-N-acetylmuramic acid kinase.